The following is a 100-amino-acid chain: Urease subunit gamma (100 aa).

This sequence belongs to the urease gamma subunit family. Heterotrimer of UreA (gamma), UreB (beta) and UreC (alpha) subunits. Three heterotrimers associate to form the active enzyme.

The protein resides in the cytoplasm. The enzyme catalyses urea + 2 H2O + H(+) = hydrogencarbonate + 2 NH4(+). The protein operates within nitrogen metabolism; urea degradation; CO(2) and NH(3) from urea (urease route): step 1/1. The polypeptide is Urease subunit gamma (Burkholderia ambifaria (strain MC40-6)).